A 447-amino-acid chain; its full sequence is Argininosuccinate synthase (447 aa).

ATP is bound by residues 17–25 (AFSGGLDTS) and alanine 43. Tyrosine 99 provides a ligand contact to L-citrulline. The ATP site is built by glycine 129 and threonine 131. Residues threonine 131, asparagine 135, and aspartate 136 each contribute to the L-aspartate site. Asparagine 135 is a binding site for L-citrulline. Aspartate 136 contacts ATP. Residues arginine 139 and serine 192 each contribute to the L-citrulline site. Residue aspartate 194 coordinates ATP. Residues threonine 201, glutamate 203, and glutamate 280 each coordinate L-citrulline.

It belongs to the argininosuccinate synthase family. Type 2 subfamily. As to quaternary structure, homotetramer.

The protein resides in the cytoplasm. The catalysed reaction is L-citrulline + L-aspartate + ATP = 2-(N(omega)-L-arginino)succinate + AMP + diphosphate + H(+). Its pathway is amino-acid biosynthesis; L-arginine biosynthesis; L-arginine from L-ornithine and carbamoyl phosphate: step 2/3. The protein is Argininosuccinate synthase (argG) of Escherichia coli O157:H7.